Here is a 255-residue protein sequence, read N- to C-terminus: Bouquet formation protein 3 (255 aa).

Helical transmembrane passes span 13-33, 48-68, 72-94, 99-116, 132-152, 172-192, 205-225, and 235-255; these read IKVSIYLFLHTLTYGLLNYHL, IPYWMSYLSIIMHVGQSLLLQ, LGYGWLLLTKYPVYVLLSTYYLT, IAWAFIIDAISLLVARCF, YSVSFLFTIMASVLISVLNYI, SLVAPPLPLQYLAHVPIGYVI, SLFLMIFLTLWNCFIPYSILF, and VVGAYLSQIWIITFICWALSL.

It is found in the endoplasmic reticulum membrane. It localises to the nucleus inner membrane. Its function is as follows. Connects telomeres to the nuclear envelop (NE) during both vegetative growth and meiosis. This connection ensures clustering of telomeres to the spindle pole body (SPB) when cells enter meiotic prophase. The chain is Bouquet formation protein 3 (bqt3) from Schizosaccharomyces pombe (strain 972 / ATCC 24843) (Fission yeast).